An 82-amino-acid chain; its full sequence is Small ribosomal subunit protein uS17 (82 aa).

It belongs to the universal ribosomal protein uS17 family. In terms of assembly, part of the 30S ribosomal subunit.

One of the primary rRNA binding proteins, it binds specifically to the 5'-end of 16S ribosomal RNA. The chain is Small ribosomal subunit protein uS17 from Phenylobacterium zucineum (strain HLK1).